The following is a 794-amino-acid chain: DNA ligase (794 aa).

Residues 35–39 (DAEYD), 84–85 (SL), and E126 contribute to the NAD(+) site. The N6-AMP-lysine intermediate role is filled by K128. NAD(+) is bound by residues R149, E186, K302, and K326. The Zn(2+) site is built by C420, C423, C450, and C456. In terms of domain architecture, BRCT spans 711-794 (VEGLPLAGQT…KLLDEYGVAH (84 aa)).

Belongs to the NAD-dependent DNA ligase family. LigA subfamily. The cofactor is Mg(2+). Mn(2+) serves as cofactor.

It catalyses the reaction NAD(+) + (deoxyribonucleotide)n-3'-hydroxyl + 5'-phospho-(deoxyribonucleotide)m = (deoxyribonucleotide)n+m + AMP + beta-nicotinamide D-nucleotide.. DNA ligase that catalyzes the formation of phosphodiester linkages between 5'-phosphoryl and 3'-hydroxyl groups in double-stranded DNA using NAD as a coenzyme and as the energy source for the reaction. It is essential for DNA replication and repair of damaged DNA. This chain is DNA ligase, found in Pseudomonas paraeruginosa (strain DSM 24068 / PA7) (Pseudomonas aeruginosa (strain PA7)).